Reading from the N-terminus, the 481-residue chain is Abietadienol/abietadienal oxidase (481 aa).

A helical membrane pass occupies residues 2–22 (ADQISLLLVVFTAAVALLHLI). Position 430 (Cys430) interacts with heme.

The protein belongs to the cytochrome P450 family. The cofactor is heme. In terms of tissue distribution, expressed in young tissues such as flushing buds and green bark tissues. Lower levels in mature needles and bark.

Its subcellular location is the membrane. It carries out the reaction abieta-7,13-dien-18-ol + 2 reduced [NADPH--hemoprotein reductase] + 2 O2 = abieta-7,13-dien-18-oate + 2 oxidized [NADPH--hemoprotein reductase] + 3 H2O + 3 H(+). Functionally, multifunctional and multisubstrate cytochrome P450 that oxidizes the respective carbon 18 of abietadienol, abietadienal, levopimaradienol, isopimara-7,15-dienol, isopimara-7,15-dienal, dehydroabietadienol, and dehydroabietadienal. This Pinus taeda (Loblolly pine) protein is Abietadienol/abietadienal oxidase (CYP720B1).